A 188-amino-acid polypeptide reads, in one-letter code: Elongation factor P (188 aa).

K34 is subject to N6-(3,6-diaminohexanoyl)-5-hydroxylysine.

The protein belongs to the elongation factor P family. Post-translationally, may be beta-lysylated on the epsilon-amino group of Lys-34 by the combined action of EpmA and EpmB, and then hydroxylated on the C5 position of the same residue by EpmC (if this protein is present). Lysylation is critical for the stimulatory effect of EF-P on peptide-bond formation. The lysylation moiety may extend toward the peptidyltransferase center and stabilize the terminal 3-CCA end of the tRNA. Hydroxylation of the C5 position on Lys-34 may allow additional potential stabilizing hydrogen-bond interactions with the P-tRNA.

Its subcellular location is the cytoplasm. The protein operates within protein biosynthesis; polypeptide chain elongation. In terms of biological role, involved in peptide bond synthesis. Alleviates ribosome stalling that occurs when 3 or more consecutive Pro residues or the sequence PPG is present in a protein, possibly by augmenting the peptidyl transferase activity of the ribosome. Modification of Lys-34 is required for alleviation. In Glaesserella parasuis serovar 5 (strain SH0165) (Haemophilus parasuis), this protein is Elongation factor P.